A 542-amino-acid polypeptide reads, in one-letter code: CTP synthase (542 aa).

Residues 1–265 (MTRYIFVTGG…DDFVVERFGL (265 aa)) are amidoligase domain. Residue Ser-13 participates in CTP binding. Ser-13 lines the UTP pocket. ATP is bound by residues 14-19 (SLGKGI) and Asp-71. Residues Asp-71 and Glu-139 each coordinate Mg(2+). CTP-binding positions include 146 to 148 (DIE), 186 to 191 (KTKPTQ), and Lys-222. Residues 186 to 191 (KTKPTQ) and Lys-222 contribute to the UTP site. Positions 290-541 (TIAMVGKYME…VKAALAQKNK (252 aa)) constitute a Glutamine amidotransferase type-1 domain. Residue Gly-351 coordinates L-glutamine. Cys-378 acts as the Nucleophile; for glutamine hydrolysis in catalysis. Residues 379 to 382 (LGMQ), Glu-402, and Arg-469 each bind L-glutamine. Active-site residues include His-514 and Glu-516.

Belongs to the CTP synthase family. Homotetramer.

It carries out the reaction UTP + L-glutamine + ATP + H2O = CTP + L-glutamate + ADP + phosphate + 2 H(+). The enzyme catalyses L-glutamine + H2O = L-glutamate + NH4(+). It catalyses the reaction UTP + NH4(+) + ATP = CTP + ADP + phosphate + 2 H(+). The protein operates within pyrimidine metabolism; CTP biosynthesis via de novo pathway; CTP from UDP: step 2/2. Its activity is regulated as follows. Allosterically activated by GTP, when glutamine is the substrate; GTP has no effect on the reaction when ammonia is the substrate. The allosteric effector GTP functions by stabilizing the protein conformation that binds the tetrahedral intermediate(s) formed during glutamine hydrolysis. Inhibited by the product CTP, via allosteric rather than competitive inhibition. Its function is as follows. Catalyzes the ATP-dependent amination of UTP to CTP with either L-glutamine or ammonia as the source of nitrogen. Regulates intracellular CTP levels through interactions with the four ribonucleotide triphosphates. The polypeptide is CTP synthase (Pseudomonas entomophila (strain L48)).